Consider the following 449-residue polypeptide: UDP-N-acetylmuramoylalanine--D-glutamate ligase (449 aa).

118–124 (GSNGKTT) is a binding site for ATP.

This sequence belongs to the MurCDEF family.

The protein localises to the cytoplasm. The catalysed reaction is UDP-N-acetyl-alpha-D-muramoyl-L-alanine + D-glutamate + ATP = UDP-N-acetyl-alpha-D-muramoyl-L-alanyl-D-glutamate + ADP + phosphate + H(+). It functions in the pathway cell wall biogenesis; peptidoglycan biosynthesis. Its function is as follows. Cell wall formation. Catalyzes the addition of glutamate to the nucleotide precursor UDP-N-acetylmuramoyl-L-alanine (UMA). This Oceanobacillus iheyensis (strain DSM 14371 / CIP 107618 / JCM 11309 / KCTC 3954 / HTE831) protein is UDP-N-acetylmuramoylalanine--D-glutamate ligase.